The following is a 199-amino-acid chain: Recombination protein RecR (199 aa).

A C4-type zinc finger spans residues 56–71 (CSICFNVSQDDQCRIC). The Toprim domain maps to 79-174 (SVLCVVEEYK…RVTRLASGLP (96 aa)).

The protein belongs to the RecR family.

May play a role in DNA repair. It seems to be involved in an RecBC-independent recombinational process of DNA repair. It may act with RecF and RecO. This chain is Recombination protein RecR, found in Nocardioides sp. (strain ATCC BAA-499 / JS614).